Here is a 150-residue protein sequence, read N- to C-terminus: Peptide deformylase (150 aa).

Cys88 and His130 together coordinate Fe cation. Residue Glu131 is part of the active site. A Fe cation-binding site is contributed by His134.

The protein belongs to the polypeptide deformylase family. Fe(2+) is required as a cofactor.

It catalyses the reaction N-terminal N-formyl-L-methionyl-[peptide] + H2O = N-terminal L-methionyl-[peptide] + formate. Its function is as follows. Removes the formyl group from the N-terminal Met of newly synthesized proteins. Requires at least a dipeptide for an efficient rate of reaction. N-terminal L-methionine is a prerequisite for activity but the enzyme has broad specificity at other positions. This chain is Peptide deformylase, found in Desulfitobacterium hafniense (strain Y51).